A 59-amino-acid polypeptide reads, in one-letter code: Single-pass membrane and coiled-coil domain-containing protein 4 (59 aa).

The disordered stretch occupies residues 1 to 23 (MRQLKGKPKKETSKDKKERKQAM). Positions 9–22 (KKETSKDKKERKQA) are enriched in basic and acidic residues. Positions 9–31 (KKETSKDKKERKQAMQEARQQIT) form a coiled coil. Residues 32 to 52 (TVVLPTLAVVVLLIVVFVYVA) traverse the membrane as a helical segment.

This sequence belongs to the SMCO4 family.

Its subcellular location is the membrane. The chain is Single-pass membrane and coiled-coil domain-containing protein 4 (SMCO4) from Homo sapiens (Human).